Here is a 452-residue protein sequence, read N- to C-terminus: Tubulin alpha-1 chain (452 aa).

Q11 contacts GTP. Residue K40 is modified to N6-acetyllysine. Positions 71, 144, 145, 179, 206, and 228 each coordinate GTP. Residue E71 participates in Mg(2+) binding. Residue E254 is part of the active site. The interval 430–452 is disordered; that stretch reads KDYEEVGAESGDGDDDGLGEEEY. The span at 431 to 452 shows a compositional bias: acidic residues; the sequence is DYEEVGAESGDGDDDGLGEEEY.

The protein belongs to the tubulin family. In terms of assembly, dimer of alpha and beta chains. A typical microtubule is a hollow water-filled tube with an outer diameter of 25 nm and an inner diameter of 15 nM. Alpha-beta heterodimers associate head-to-tail to form protofilaments running lengthwise along the microtubule wall with the beta-tubulin subunit facing the microtubule plus end conferring a structural polarity. Microtubules usually have 13 protofilaments but different protofilament numbers can be found in some organisms and specialized cells. Requires Mg(2+) as cofactor. In terms of processing, undergoes a tyrosination/detyrosination cycle, the cyclic removal and re-addition of a C-terminal tyrosine residue by the enzymes tubulin tyrosine carboxypeptidase (TTCP) and tubulin tyrosine ligase (TTL), respectively. Post-translationally, acetylation of alpha chains at Lys-40 stabilizes microtubules and affects affinity and processivity of microtubule motors. This modification has a role in multiple cellular functions, ranging from cell motility, cell cycle progression or cell differentiation to intracellular trafficking and signaling.

The protein localises to the cytoplasm. It is found in the cytoskeleton. It catalyses the reaction GTP + H2O = GDP + phosphate + H(+). Its function is as follows. Tubulin is the major constituent of microtubules, a cylinder consisting of laterally associated linear protofilaments composed of alpha- and beta-tubulin heterodimers. Microtubules grow by the addition of GTP-tubulin dimers to the microtubule end, where a stabilizing cap forms. Below the cap, tubulin dimers are in GDP-bound state, owing to GTPase activity of alpha-tubulin. The protein is Tubulin alpha-1 chain (TUBA1) of Pisum sativum (Garden pea).